The primary structure comprises 437 residues: UDP-N-acetylmuramate--L-alanine ligase (437 aa).

ATP is bound at residue 108–114 (GAHGKTS).

This sequence belongs to the MurCDEF family.

The protein localises to the cytoplasm. It carries out the reaction UDP-N-acetyl-alpha-D-muramate + L-alanine + ATP = UDP-N-acetyl-alpha-D-muramoyl-L-alanine + ADP + phosphate + H(+). The protein operates within cell wall biogenesis; peptidoglycan biosynthesis. Cell wall formation. In Staphylococcus carnosus (strain TM300), this protein is UDP-N-acetylmuramate--L-alanine ligase.